The following is a 327-amino-acid chain: MVINNQNNNNQNNNQNNNNKNDNLNNSTTTTTTTATTTKSSTLFHSNDFFSGLIAGIVSRTLTAPLERIKILNQVEVILKDGTKYNRIIPAFKVIIKEEGIAGLFRGNFVNIIKAGPQSAIRFYSYGAFKRMASEPDGSISVINRMWAGASSGVVSVALTHPLDVIKTHITVIAPTAATIKNVTKGIYRDLGIIGFFRGLSAGILNIAPFAALNFTFYETIKEKTQQYILKSPPLYAPSIYGAISGGLTMTILYPLDVVKRRIMLQHFDRNQLPIYKNFIDAIIKITKTEGISALYKGIRPAYLKVIPTVSINFLIYEGAITLFEKK.

The interval Met1–Thr36 is disordered. Residues Met1–Asp48 lie on the Mitochondrial intermembrane side of the membrane. 3 Solcar repeats span residues Leu43–Met132, Ile140–Lys224, and Pro233–Leu323. Residues Phe49 to Leu66 traverse the membrane as a helical segment. Residues Glu67–Arg106 lie on the Mitochondrial matrix side of the membrane. The chain crosses the membrane as a helical span at residues Gly107 to Gly127. Topologically, residues Ala128 to Arg145 are mitochondrial intermembrane. Residues Met146–Ile166 traverse the membrane as a helical segment. At Lys167–Gly192 the chain is on the mitochondrial matrix side. A helical membrane pass occupies residues Ile193–Leu213. Topologically, residues Asn214–Pro238 are mitochondrial intermembrane. The chain crosses the membrane as a helical span at residues Ser239–Val259. Residues Lys260–Tyr303 are Mitochondrial matrix-facing. Residues Leu304–Phe324 form a helical membrane-spanning segment. The Mitochondrial intermembrane segment spans residues Glu325–Lys327.

Belongs to the mitochondrial carrier (TC 2.A.29) family.

The protein localises to the mitochondrion inner membrane. In terms of biological role, calcium-dependent mitochondrial solute carrier. Mitochondrial solute carriers shuttle metabolites, nucleotides, and cofactors through the mitochondrial inner membrane. This chain is Mitochondrial substrate carrier family protein A (mcfA), found in Dictyostelium discoideum (Social amoeba).